The following is a 353-amino-acid chain: 2,4-diaminopentanoate dehydrogenase (353 aa).

This sequence belongs to the DapB family. Homodimer.

The catalysed reaction is (2R,4S)-2,4-diaminopentanoate + NAD(+) + H2O = (2R)-2-amino-4-oxopentanoate + NH4(+) + NADH + H(+). The enzyme catalyses (2R,4S)-2,4-diaminopentanoate + NADP(+) + H2O = (2R)-2-amino-4-oxopentanoate + NH4(+) + NADPH + H(+). With respect to regulation, inhibited by p-chloromercuribenzoate, iodoacetate and N-ethylmaleimide. Involved in the ornithine fermentation pathway. Catalyzes the oxidative deamination of (2R,4S)-2,4-diaminopentanoate (DAP) to yield 2-amino-4-ketopentanoate (AKP). The protein is 2,4-diaminopentanoate dehydrogenase of Acetoanaerobium sticklandii (strain ATCC 12662 / DSM 519 / JCM 1433 / CCUG 9281 / NCIMB 10654 / HF) (Clostridium sticklandii).